Reading from the N-terminus, the 235-residue chain is Large ribosomal subunit protein uL1 (235 aa).

A disordered region spans residues methionine 1–threonine 22.

The protein belongs to the universal ribosomal protein uL1 family. In terms of assembly, part of the 50S ribosomal subunit.

Functionally, binds directly to 23S rRNA. The L1 stalk is quite mobile in the ribosome, and is involved in E site tRNA release. In terms of biological role, protein L1 is also a translational repressor protein, it controls the translation of the L11 operon by binding to its mRNA. This Mycobacterium ulcerans (strain Agy99) protein is Large ribosomal subunit protein uL1.